The primary structure comprises 117 residues: Non-specific lipid-transfer protein 1 (117 aa).

Residues Met-1–Ala-26 form the signal peptide. Disulfide bonds link Cys-29/Cys-76, Cys-39/Cys-53, Cys-54/Cys-99, and Cys-74/Cys-113. Asp-33 carries the Cis-14-hydroxy-10,13-dioxo-7-heptadecenoic acid aspartate ester lipid modification.

This sequence belongs to the plant LTP family. As to expression, aleurone layer of developing and germinating seeds.

Its function is as follows. Plant non-specific lipid-transfer proteins transfer phospholipids as well as galactolipids across membranes. May play a role in wax or cutin deposition in the cell walls of expanding epidermal cells and certain secretory tissues. The polypeptide is Non-specific lipid-transfer protein 1 (LTP1) (Hordeum vulgare (Barley)).